The chain runs to 404 residues: 4-hydroxy-3-methylbut-2-enyl diphosphate reductase (404 aa).

Cys-66 is a [4Fe-4S] cluster binding site. Residue His-96 coordinates (2E)-4-hydroxy-3-methylbut-2-enyl diphosphate. Residue His-96 coordinates dimethylallyl diphosphate. His-96 serves as a coordination point for isopentenyl diphosphate. Cys-157 is a binding site for [4Fe-4S] cluster. His-185 is a binding site for (2E)-4-hydroxy-3-methylbut-2-enyl diphosphate. A dimethylallyl diphosphate-binding site is contributed by His-185. His-185 is an isopentenyl diphosphate binding site. The active-site Proton donor is the Glu-187. Thr-250 lines the (2E)-4-hydroxy-3-methylbut-2-enyl diphosphate pocket. Cys-288 is a [4Fe-4S] cluster binding site. The (2E)-4-hydroxy-3-methylbut-2-enyl diphosphate site is built by Ser-317, Ser-318, Asn-319, and Ser-380. Dimethylallyl diphosphate contacts are provided by Ser-317, Ser-318, Asn-319, and Ser-380. 4 residues coordinate isopentenyl diphosphate: Ser-317, Ser-318, Asn-319, and Ser-380.

This sequence belongs to the IspH family. [4Fe-4S] cluster is required as a cofactor.

The enzyme catalyses isopentenyl diphosphate + 2 oxidized [2Fe-2S]-[ferredoxin] + H2O = (2E)-4-hydroxy-3-methylbut-2-enyl diphosphate + 2 reduced [2Fe-2S]-[ferredoxin] + 2 H(+). The catalysed reaction is dimethylallyl diphosphate + 2 oxidized [2Fe-2S]-[ferredoxin] + H2O = (2E)-4-hydroxy-3-methylbut-2-enyl diphosphate + 2 reduced [2Fe-2S]-[ferredoxin] + 2 H(+). The protein operates within isoprenoid biosynthesis; dimethylallyl diphosphate biosynthesis; dimethylallyl diphosphate from (2E)-4-hydroxy-3-methylbutenyl diphosphate: step 1/1. It participates in isoprenoid biosynthesis; isopentenyl diphosphate biosynthesis via DXP pathway; isopentenyl diphosphate from 1-deoxy-D-xylulose 5-phosphate: step 6/6. In terms of biological role, catalyzes the conversion of 1-hydroxy-2-methyl-2-(E)-butenyl 4-diphosphate (HMBPP) into a mixture of isopentenyl diphosphate (IPP) and dimethylallyl diphosphate (DMAPP). Acts in the terminal step of the DOXP/MEP pathway for isoprenoid precursor biosynthesis. This Prochlorococcus marinus (strain MIT 9211) protein is 4-hydroxy-3-methylbut-2-enyl diphosphate reductase.